An 89-amino-acid chain; its full sequence is Small ribosomal subunit protein uS15 (89 aa).

The protein belongs to the universal ribosomal protein uS15 family. As to quaternary structure, part of the 30S ribosomal subunit. Forms a bridge to the 50S subunit in the 70S ribosome, contacting the 23S rRNA.

In terms of biological role, one of the primary rRNA binding proteins, it binds directly to 16S rRNA where it helps nucleate assembly of the platform of the 30S subunit by binding and bridging several RNA helices of the 16S rRNA. Its function is as follows. Forms an intersubunit bridge (bridge B4) with the 23S rRNA of the 50S subunit in the ribosome. This is Small ribosomal subunit protein uS15 from Aliivibrio fischeri (strain ATCC 700601 / ES114) (Vibrio fischeri).